We begin with the raw amino-acid sequence, 109 residues long: Large ribosomal subunit protein bL19 (109 aa).

Belongs to the bacterial ribosomal protein bL19 family.

This protein is located at the 30S-50S ribosomal subunit interface and may play a role in the structure and function of the aminoacyl-tRNA binding site. The chain is Large ribosomal subunit protein bL19 from Rubrobacter xylanophilus (strain DSM 9941 / JCM 11954 / NBRC 16129 / PRD-1).